Here is a 1214-residue protein sequence, read N- to C-terminus: Formin-D (1214 aa).

Positions 10-379 (KKEESPQSID…KMNNGESYLD (370 aa)) constitute a GBD/FH3 domain. The stretch at 401–448 (SGEKAVLIQKEIEDLKKQKKRDQDKLAEKDKLLTKLAKRMRKMEEAIK) forms a coiled coil. One can recognise an FH1 domain in the interval 457-544 (NNQIEIESPP…GSGDGIPLPP (88 aa)). 2 stretches are compositionally biased toward polar residues: residues 462-479 (IESP…TTPG) and 518-534 (LDTT…QTEA). Disordered stretches follow at residues 462 to 490 (IESP…TSPV), 507 to 569 (APNG…SRPP), 868 to 948 (PKSV…PLKD), 1026 to 1045 (DKST…IKKS), 1054 to 1089 (LKKI…DDED), and 1133 to 1214 (MNLQ…EGEN). Positions 541 to 554 (PLPPGAPPPPPPPG) are enriched in pro residues. The FH2 domain maps to 562-1037 (PQLCSRPPSI…STQRKNEKER (476 aa)). Basic and acidic residues predominate over residues 868–877 (PKSVEPKPDD). A compositionally biased stretch (polar residues) spans 930-940 (QVNTNSTSDSK). Residues 1019 to 1056 (EIEKSIKDKSTQRKNEKERKEMEIKKSKLEMIHSKLKK) are a coiled coil. Residues 1059-1071 (SPSSSNRILASNE) are compositionally biased toward polar residues. Positions 1065–1095 (RILASNESSPTSSTSSVVHQHDDEDEETIKE) constitute a DAD domain. The span at 1161–1171 (SSTYSSISSIY) shows a compositional bias: low complexity. The span at 1174-1214 (EPLDMSDQEDEDEEEEEDEEEEEEEEEGDDDNDNDEEEGEN) shows a compositional bias: acidic residues. Residues 1176–1207 (LDMSDQEDEDEEEEEDEEEEEEEEEGDDDNDN) adopt a coiled-coil conformation.

Belongs to the formin homology family. Diaphanous subfamily. As to quaternary structure, interacts (via GBD/FH3 domain) with activated Rho-GTPases.

Its function is as follows. Formins play an important role in the nucleation of actin and the formation of linear actin filaments. The sequence is that of Formin-D (forD) from Dictyostelium discoideum (Social amoeba).